The primary structure comprises 602 residues: NADH-quinone oxidoreductase subunit C/D (602 aa).

The tract at residues 1–192 is NADH dehydrogenase I subunit C; the sequence is MVNNMTDLTA…DPFELTKAKQ (192 aa). The segment at 216 to 602 is NADH dehydrogenase I subunit D; that stretch reads DFMFLNLGPN…IDFVMSDVDR (387 aa).

In the N-terminal section; belongs to the complex I 30 kDa subunit family. It in the C-terminal section; belongs to the complex I 49 kDa subunit family. In terms of assembly, NDH-1 is composed of 13 different subunits. Subunits NuoB, CD, E, F, and G constitute the peripheral sector of the complex.

It localises to the cell inner membrane. It carries out the reaction a quinone + NADH + 5 H(+)(in) = a quinol + NAD(+) + 4 H(+)(out). NDH-1 shuttles electrons from NADH, via FMN and iron-sulfur (Fe-S) centers, to quinones in the respiratory chain. The immediate electron acceptor for the enzyme in this species is believed to be ubiquinone. Couples the redox reaction to proton translocation (for every two electrons transferred, four hydrogen ions are translocated across the cytoplasmic membrane), and thus conserves the redox energy in a proton gradient. The chain is NADH-quinone oxidoreductase subunit C/D from Klebsiella pneumoniae (strain 342).